The primary structure comprises 613 residues: Alkyldihydroxyacetonephosphate synthase (613 aa).

The 182-residue stretch at isoleucine 126–leucine 307 folds into the FAD-binding PCMH-type domain. FAD contacts are provided by residues proline 158–asparagine 164, aspartate 228–threonine 234, alanine 241–serine 244, and glutamate 291–valine 297. Arginine 437 contacts substrate. The Proton donor/acceptor role is filled by tyrosine 498. Residues histidine 534–histidine 536 are important for enzyme activity. The tract at residues asparagine 572–arginine 593 is disordered. Residues alanine 611–leucine 613 carry the Microbody targeting signal motif.

Belongs to the FAD-binding oxidoreductase/transferase type 4 family. In terms of assembly, homodimer. It depends on FAD as a cofactor.

The protein resides in the peroxisome. It catalyses the reaction a long chain fatty alcohol + a 1-acylglycerone 3-phosphate = a 1-O-alkylglycerone 3-phosphate + a long-chain fatty acid + H(+). It functions in the pathway glycerolipid metabolism; ether lipid biosynthesis. In terms of biological role, catalyzes the exchange of an acyl for a long-chain alkyl group and the formation of the ether bond in the biosynthesis of ether phospholipids. This is Alkyldihydroxyacetonephosphate synthase from Trypanosoma brucei brucei.